A 183-amino-acid chain; its full sequence is Guanylate kinase (183 aa).

The Guanylate kinase-like domain maps to glycine 4 to phenylalanine 182. Glycine 11–glycine 18 provides a ligand contact to ATP.

The protein belongs to the guanylate kinase family.

It localises to the cytoplasm. It carries out the reaction GMP + ATP = GDP + ADP. It catalyses the reaction dZMP + ATP = dZDP + ADP. Its pathway is purine metabolism. Functionally, essential for recycling GMP and indirectly, cGMP. (Microbial infection) Catalyzes the phosphorylation of dZMP to dZDP, when the bacterium is infected by a phage that produces the substrate for the synthesis of dZTP (2- amino-2'-deoxyadenosine 5'-triphosphate), which is then used by the phage as a DNA polymerase substrate. The chain is Guanylate kinase from Synechococcus sp. (strain ATCC 27144 / PCC 6301 / SAUG 1402/1) (Anacystis nidulans).